Here is a 277-residue protein sequence, read N- to C-terminus: Release factor glutamine methyltransferase (277 aa).

S-adenosyl-L-methionine contacts are provided by residues 117–121, Asp-140, Trp-168, and Asn-183; that span reads GTGTG. 183 to 186 contributes to the substrate binding site; it reads NPPY.

The protein belongs to the protein N5-glutamine methyltransferase family. PrmC subfamily.

The enzyme catalyses L-glutaminyl-[peptide chain release factor] + S-adenosyl-L-methionine = N(5)-methyl-L-glutaminyl-[peptide chain release factor] + S-adenosyl-L-homocysteine + H(+). Methylates the class 1 translation termination release factors RF1/PrfA and RF2/PrfB on the glutamine residue of the universally conserved GGQ motif. The sequence is that of Release factor glutamine methyltransferase from Salmonella typhimurium (strain LT2 / SGSC1412 / ATCC 700720).